The sequence spans 311 residues: Methionyl-tRNA formyltransferase (311 aa).

S110–P113 provides a ligand contact to (6S)-5,6,7,8-tetrahydrofolate.

The protein belongs to the Fmt family.

The enzyme catalyses L-methionyl-tRNA(fMet) + (6R)-10-formyltetrahydrofolate = N-formyl-L-methionyl-tRNA(fMet) + (6S)-5,6,7,8-tetrahydrofolate + H(+). Its function is as follows. Attaches a formyl group to the free amino group of methionyl-tRNA(fMet). The formyl group appears to play a dual role in the initiator identity of N-formylmethionyl-tRNA by promoting its recognition by IF2 and preventing the misappropriation of this tRNA by the elongation apparatus. In Streptococcus pyogenes serotype M1, this protein is Methionyl-tRNA formyltransferase.